The following is a 629-amino-acid chain: tRNA uridine 5-carboxymethylaminomethyl modification enzyme MnmG (629 aa).

An FAD-binding site is contributed by 13 to 18; the sequence is GGGHAG. NAD(+) is bound at residue 273 to 287; sequence GPRYCPSIEDKIHRF.

This sequence belongs to the MnmG family. As to quaternary structure, homodimer. Heterotetramer of two MnmE and two MnmG subunits. Requires FAD as cofactor.

The protein localises to the cytoplasm. Its function is as follows. NAD-binding protein involved in the addition of a carboxymethylaminomethyl (cmnm) group at the wobble position (U34) of certain tRNAs, forming tRNA-cmnm(5)s(2)U34. The protein is tRNA uridine 5-carboxymethylaminomethyl modification enzyme MnmG of Shewanella denitrificans (strain OS217 / ATCC BAA-1090 / DSM 15013).